The primary structure comprises 394 residues: 1-deoxy-D-xylulose 5-phosphate reductoisomerase (394 aa).

NADPH-binding residues include Thr11, Gly12, Ser13, Ile14, Gly37, Asn39, and Asn126. A 1-deoxy-D-xylulose 5-phosphate-binding site is contributed by Lys127. Residue Glu128 coordinates NADPH. A Mn(2+)-binding site is contributed by Asp152. Residues Ser153, Glu154, Ser178, and His201 each coordinate 1-deoxy-D-xylulose 5-phosphate. Residue Glu154 participates in Mn(2+) binding. Gly207 serves as a coordination point for NADPH. 1-deoxy-D-xylulose 5-phosphate-binding residues include Ser214, Asn219, Lys220, and Glu223. Mn(2+) is bound at residue Glu223.

This sequence belongs to the DXR family. Mg(2+) serves as cofactor. Mn(2+) is required as a cofactor.

It carries out the reaction 2-C-methyl-D-erythritol 4-phosphate + NADP(+) = 1-deoxy-D-xylulose 5-phosphate + NADPH + H(+). It participates in isoprenoid biosynthesis; isopentenyl diphosphate biosynthesis via DXP pathway; isopentenyl diphosphate from 1-deoxy-D-xylulose 5-phosphate: step 1/6. Catalyzes the NADPH-dependent rearrangement and reduction of 1-deoxy-D-xylulose-5-phosphate (DXP) to 2-C-methyl-D-erythritol 4-phosphate (MEP). This chain is 1-deoxy-D-xylulose 5-phosphate reductoisomerase, found in Synechocystis sp. (strain ATCC 27184 / PCC 6803 / Kazusa).